The primary structure comprises 230 residues: Uracil-DNA glycosylase (230 aa).

D65 functions as the Proton acceptor in the catalytic mechanism.

Belongs to the uracil-DNA glycosylase (UDG) superfamily. UNG family.

The protein localises to the cytoplasm. The catalysed reaction is Hydrolyzes single-stranded DNA or mismatched double-stranded DNA and polynucleotides, releasing free uracil.. Excises uracil residues from the DNA which can arise as a result of misincorporation of dUMP residues by DNA polymerase or due to deamination of cytosine. This chain is Uracil-DNA glycosylase, found in Pediococcus pentosaceus (strain ATCC 25745 / CCUG 21536 / LMG 10740 / 183-1w).